Consider the following 26-residue polypeptide: AMP deaminase 1 (26 aa).

The protein belongs to the metallo-dependent hydrolases superfamily. Adenosine and AMP deaminases family. In terms of assembly, homotetramer.

The enzyme catalyses AMP + H2O + H(+) = IMP + NH4(+). It participates in purine metabolism; IMP biosynthesis via salvage pathway; IMP from AMP: step 1/1. AMP deaminase plays a critical role in energy metabolism. The chain is AMP deaminase 1 (AMPD1) from Gallus gallus (Chicken).